The chain runs to 589 residues: Poly(3-hydroxyalkanoate) polymerase subunit PhaC (589 aa).

The disordered stretch occupies residues 1 to 23; it reads MATGKGAAASTQEGKSQPFKVTP. Cysteine 319 is an active-site residue.

The protein belongs to the PHA/PHB synthase family. Type I PhaC subfamily. Monomer.

The protein localises to the cytoplasm. The enzyme catalyses (3R)-3-hydroxybutanoyl-CoA + [(3R)-hydroxybutanoate](n) = [(3R)-hydroxybutanoate](n+1) + CoA. It functions in the pathway biopolymer metabolism; poly-(R)-3-hydroxybutanoate biosynthesis. Functionally, polymerizes (R)-3-hydroxybutyryl-CoA to create polyhydroxybutyrate (PHB) which consists of thousands of hydroxybutyrate molecules linked end to end. PHB serves as an intracellular energy reserve material when cells grow under conditions of nutrient limitation. The polypeptide is Poly(3-hydroxyalkanoate) polymerase subunit PhaC (Cupriavidus necator (strain ATCC 17699 / DSM 428 / KCTC 22496 / NCIMB 10442 / H16 / Stanier 337) (Ralstonia eutropha)).